The primary structure comprises 629 residues: MTTKSKNAINLSDSAKVDEQSVQPFTRSQKVYVQGSRPDIRVPMREITLDVTPTDFGGEINAPVTVYDTSGPYTDPNVVIDVRKGLGDVRSAWIDDRGDTERLPGLSSNFGQERLADPELTKLRFAHVNNPRRAKAGANVSQMHYARKGIITAEMEYVAIRENMKLQEARAAGLLKQQHAGHSFGASIPKEITPEFVREEIARGRAIIPANINHVELEPMIIGRNFLVKINGNIGNSALGSSIEEEVAKLTWGIRWGSDTVMDLSTGKHIHETREWIIRNSPVPIGTVPIYQALEKVNGVAEDLTWELFRDTLIEQAEQGVDYFTIHAGVLLRYVPLTAKRVTGIVSRGGSIMAKWCLAHHKENFLYTHFDEICEIMKAYDVSFSLGDGLRPGSIADANDEAQFGELETLGELTKIAWKHDVQCMIEGPGHVPMQLIKENMDKQLECCDEAPFYTLGPLTTDIAPGYDHITSGIGAAMIGWFGCAMLCYVTPKEHLGLPNKDDVKTGIITYKIAAHAADLAKGHPGAQIRDNALSKARFEFRWEDQFNLGLDPDTARSYHDETLPKDSAKVAHFCSMCGPKFCSMKITQEVREYAANQRIDAVDVDVAQGLAEQAERFKKEGSQLYKKV.

Over residues 1–13 (MTTKSKNAINLSD) the composition is skewed to polar residues. Residues 1-22 (MTTKSKNAINLSDSAKVDEQSV) are disordered. Substrate is bound by residues asparagine 233, methionine 262, tyrosine 291, histidine 327, 347-349 (SRG), 388-391 (DGLR), and glutamate 427. Histidine 431 contributes to the Zn(2+) binding site. Tyrosine 454 lines the substrate pocket. Zn(2+) is bound at residue histidine 495. The [4Fe-4S] cluster site is built by cysteine 575, cysteine 578, and cysteine 583.

Belongs to the ThiC family. As to quaternary structure, homodimer. It depends on [4Fe-4S] cluster as a cofactor.

The catalysed reaction is 5-amino-1-(5-phospho-beta-D-ribosyl)imidazole + S-adenosyl-L-methionine = 4-amino-2-methyl-5-(phosphooxymethyl)pyrimidine + CO + 5'-deoxyadenosine + formate + L-methionine + 3 H(+). It functions in the pathway cofactor biosynthesis; thiamine diphosphate biosynthesis. Its function is as follows. Catalyzes the synthesis of the hydroxymethylpyrimidine phosphate (HMP-P) moiety of thiamine from aminoimidazole ribotide (AIR) in a radical S-adenosyl-L-methionine (SAM)-dependent reaction. This chain is Phosphomethylpyrimidine synthase, found in Pseudomonas fluorescens (strain Pf0-1).